Consider the following 309-residue polypeptide: Malate dehydrogenase (309 aa).

Residues 9–14 (GAGFVG) and Asp33 each bind NAD(+). The substrate site is built by Arg82 and Arg88. Residues Asn95 and 118–120 (VNN) each bind NAD(+). The substrate site is built by Asn120 and Arg151. Residue His175 is the Proton acceptor of the active site.

It belongs to the LDH/MDH superfamily. MDH type 3 family.

It carries out the reaction (S)-malate + NAD(+) = oxaloacetate + NADH + H(+). Its function is as follows. Catalyzes the reversible oxidation of malate to oxaloacetate. This chain is Malate dehydrogenase, found in Chloroflexus aggregans (strain MD-66 / DSM 9485).